The chain runs to 222 residues: Glutathione-specific gamma-glutamylcyclotransferase 1 (222 aa).

The segment covering 1-22 (MKQESAAPNTPPTSQSPTPSAQ) has biased composition (low complexity). The segment at 1 to 24 (MKQESAAPNTPPTSQSPTPSAQFP) is disordered. 35 to 40 (IFGYGS) is a substrate binding site. Glu115 (proton acceptor) is an active-site residue.

This sequence belongs to the gamma-glutamylcyclotransferase family. ChaC subfamily. Interacts with NOTCH1 (via extracellular region).

The protein resides in the cytoplasm. Its subcellular location is the cytosol. It localises to the golgi apparatus. The protein localises to the trans-Golgi network. It carries out the reaction glutathione = L-cysteinylglycine + 5-oxo-L-proline. Functionally, catalyzes the cleavage of glutathione into 5-oxo-L-proline and a Cys-Gly dipeptide. Acts specifically on glutathione, but not on other gamma-glutamyl peptides. Glutathione depletion is an important factor for apoptosis initiation and execution. Acts as a pro-apoptotic component of the unfolded protein response pathway by mediating the pro-apoptotic effects of the ATF4-ATF3-DDIT3/CHOP cascade. Negative regulator of Notch signaling pathway involved in embryonic neurogenesis: acts by inhibiting Notch cleavage by furin, maintaining Notch in an immature inactive form, thereby promoting neurogenesis in embryos. In Homo sapiens (Human), this protein is Glutathione-specific gamma-glutamylcyclotransferase 1.